A 1091-amino-acid chain; its full sequence is ATP-dependent helicase/deoxyribonuclease subunit B (1091 aa).

This sequence belongs to the helicase family. AddB/RexB type 2 subfamily. In terms of assembly, heterodimer of AddA and RexB. Mg(2+) serves as cofactor.

Functionally, the heterodimer acts as both an ATP-dependent DNA helicase and an ATP-dependent, dual-direction single-stranded exonuclease. Recognizes the chi site generating a DNA molecule suitable for the initiation of homologous recombination. This subunit has 5' -&gt; 3' nuclease activity but not helicase activity. The protein is ATP-dependent helicase/deoxyribonuclease subunit B of Streptococcus pneumoniae serotype 19F (strain G54).